Consider the following 326-residue polypeptide: 4-hydroxythreonine-4-phosphate dehydrogenase (326 aa).

Residue threonine 132 participates in substrate binding. A divalent metal cation-binding residues include histidine 160, histidine 205, and histidine 260. Residues lysine 268, asparagine 277, and arginine 286 each coordinate substrate.

This sequence belongs to the PdxA family. In terms of assembly, homodimer. Zn(2+) is required as a cofactor. Mg(2+) serves as cofactor. Requires Co(2+) as cofactor.

Its subcellular location is the cytoplasm. The enzyme catalyses 4-(phosphooxy)-L-threonine + NAD(+) = 3-amino-2-oxopropyl phosphate + CO2 + NADH. Its pathway is cofactor biosynthesis; pyridoxine 5'-phosphate biosynthesis; pyridoxine 5'-phosphate from D-erythrose 4-phosphate: step 4/5. Functionally, catalyzes the NAD(P)-dependent oxidation of 4-(phosphooxy)-L-threonine (HTP) into 2-amino-3-oxo-4-(phosphooxy)butyric acid which spontaneously decarboxylates to form 3-amino-2-oxopropyl phosphate (AHAP). This Stenotrophomonas maltophilia (strain R551-3) protein is 4-hydroxythreonine-4-phosphate dehydrogenase.